The following is a 149-amino-acid chain: Transcriptional repressor NrdR (149 aa).

A zinc finger spans residues Cys-3–Cys-34. An ATP-cone domain is found at Pro-49–Glu-139.

It belongs to the NrdR family. Zn(2+) is required as a cofactor.

Negatively regulates transcription of bacterial ribonucleotide reductase nrd genes and operons by binding to NrdR-boxes. This chain is Transcriptional repressor NrdR, found in Glaesserella parasuis serovar 5 (strain SH0165) (Haemophilus parasuis).